Reading from the N-terminus, the 370-residue chain is Death-associated protein kinase 2 (370 aa).

The Protein kinase domain occupies 23–285; sequence YDIGEELGSG…IQEALRHPWI (263 aa). ATP is bound by residues 29-37 and lysine 52; that span reads LGSGQFAIV. The Proton acceptor role is filled by aspartate 149. Residues 287–354 form a calmodulin-binding region; the sequence is PVDTQQAMVR…RNCESDTEEN (68 aa). The tract at residues 292–301 is autoinhibitory domain; it reads QAMVRRESVV. Serine 299 is modified (phosphoserine). A Phosphoserine; by autocatalysis modification is found at serine 318. A Phosphoserine modification is found at serine 349. The residue at position 369 (threonine 369) is a Phosphothreonine.

This sequence belongs to the protein kinase superfamily. CAMK Ser/Thr protein kinase family. DAP kinase subfamily. Homodimer in its autoinhibited state. Active as monomer. Interacts with 14-3-3 proteins YWHAB, YWHAE, YWHAG, YWHAH, YWHAQ, YWHAZ and SFN; the interaction requires DAPK2 phosphorylation at Thr-369 and suppresses DAPK2 kinase activity and DAPK2-induced apoptosis. Requires Mg(2+) as cofactor. Post-translationally, autophosphorylation at Ser-318 inhibits its catalytic activity. Dephosphorylated at Ser-318 in response to activated Fas and TNF-alpha receptors. Expressed in peritubular interstitial cells of the renal cortex. Isoform 1 is found in the adult brain while isoform 2 is expressed in brains of embryos and young mice (at protein level).

The protein localises to the cytoplasm. It localises to the cytoplasmic vesicle. Its subcellular location is the autophagosome lumen. The catalysed reaction is L-seryl-[protein] + ATP = O-phospho-L-seryl-[protein] + ADP + H(+). It carries out the reaction L-threonyl-[protein] + ATP = O-phospho-L-threonyl-[protein] + ADP + H(+). With respect to regulation, activated by Ca(2+)/calmodulin. Regulated by a double locking mechanism, involving autophosphorylation at Ser-318, calmodulin binding, and dimerization. In the inactive state, Ser-318 is phosphorylated, and the kinase is dimeric. Activation involves: dephosphorylation at Ser-318, release-of-autoinhibition mechanism where calmodulin binding induces a conformational change that relieves the steric block of the active site by the autoinhibitory domain, and generation of the monomeric active form of the kinase. Calcium/calmodulin-dependent serine/threonine kinase involved in multiple cellular signaling pathways that trigger cell survival, apoptosis, and autophagy. Capable of regulating both type I apoptotic and type II autophagic cell death signals. The former involves caspase activation, chromatin and mitochondrial condensation while the latter involves caspase-independent cell death in conjunction with accumulation of mature autophagic vesicles, plasma membrane blebs, and nuclear condensation without DNA degradation. Mediator of anoikis and a suppressor of beta-catenin-dependent anchorage-independent growth of malignant epithelial cells. May play a role in granulocytic maturation. Regulates granulocytes motility by controlling cell spreading and polarization. This Mus musculus (Mouse) protein is Death-associated protein kinase 2 (Dapk2).